Here is a 678-residue protein sequence, read N- to C-terminus: DNA ligase (678 aa).

Residues 47–51 (DSDYD), 96–97 (SL), and Glu122 each bind NAD(+). Residue Lys124 is the N6-AMP-lysine intermediate of the active site. Residues Arg145, Glu182, Lys300, and Lys324 each coordinate NAD(+). Zn(2+) is bound by residues Cys418, Cys421, Cys436, and Cys442. One can recognise a BRCT domain in the interval 602 to 678 (AHNESFTNKT…IFEEDLQNLL (77 aa)).

It belongs to the NAD-dependent DNA ligase family. LigA subfamily. Mg(2+) serves as cofactor. Mn(2+) is required as a cofactor.

The catalysed reaction is NAD(+) + (deoxyribonucleotide)n-3'-hydroxyl + 5'-phospho-(deoxyribonucleotide)m = (deoxyribonucleotide)n+m + AMP + beta-nicotinamide D-nucleotide.. Functionally, DNA ligase that catalyzes the formation of phosphodiester linkages between 5'-phosphoryl and 3'-hydroxyl groups in double-stranded DNA using NAD as a coenzyme and as the energy source for the reaction. It is essential for DNA replication and repair of damaged DNA. This Francisella philomiragia subsp. philomiragia (strain ATCC 25017 / CCUG 19701 / FSC 153 / O#319-036) protein is DNA ligase.